The sequence spans 67 residues: MARITVEDCLKQIPNRFELALAATYRARQLAQGHTPKIESRDKPTVVALREIAAGQVGVEMLKKVPV.

Belongs to the RNA polymerase subunit omega family. The RNAP catalytic core consists of 2 alpha, 1 beta, 1 beta' and 1 omega subunit. When a sigma factor is associated with the core the holoenzyme is formed, which can initiate transcription.

It catalyses the reaction RNA(n) + a ribonucleoside 5'-triphosphate = RNA(n+1) + diphosphate. Promotes RNA polymerase assembly. Latches the N- and C-terminal regions of the beta' subunit thereby facilitating its interaction with the beta and alpha subunits. The sequence is that of DNA-directed RNA polymerase subunit omega from Paraburkholderia phymatum (strain DSM 17167 / CIP 108236 / LMG 21445 / STM815) (Burkholderia phymatum).